Reading from the N-terminus, the 282-residue chain is NADH-ubiquinone oxidoreductase chain 2 (282 aa).

The next 7 membrane-spanning stretches (helical) occupy residues 17–37 (ILTN…VVFI), 58–78 (SLGL…IILL), 87–107 (FWIF…FLTF), 115–135 (ILLQ…LLIC), 166–186 (FSMF…VLLI), 202–222 (TTLV…IFSL), and 232–252 (FTLF…FWLI).

It belongs to the complex I subunit 2 family.

It localises to the mitochondrion inner membrane. The catalysed reaction is a ubiquinone + NADH + 5 H(+)(in) = a ubiquinol + NAD(+) + 4 H(+)(out). Its function is as follows. Core subunit of the mitochondrial membrane respiratory chain NADH dehydrogenase (Complex I) that is believed to belong to the minimal assembly required for catalysis. Complex I functions in the transfer of electrons from NADH to the respiratory chain. The immediate electron acceptor for the enzyme is believed to be ubiquinone. This is NADH-ubiquinone oxidoreductase chain 2 from Caenorhabditis elegans.